We begin with the raw amino-acid sequence, 445 residues long: Probable fructoselysine/psicoselysine transporter FrlA (445 aa).

12 consecutive transmembrane segments (helical) span residues 10–30, 38–58, 93–113, 121–141, 155–175, 181–201, 236–256, 273–293, 334–354, 355–375, 389–410, and 417–435; these read LGFWAVLAIAVGTTVGSGIFV, AAGTPWLTVLAFVIGGLIVIP, GWASFWANDAPSLSIMALAIV, PIDPLLGKFIAAGLIIAFMLL, LITIAKIIPFTIVIGLGIFWF, AAPTTTAIGATGSFMALLAGI, CLLVLVLYTLLALVISGLMPF, IPALGSTAGIFVAITAMIVIL, IILQGALGIFFIFVSDLTSLL, GYFTLVMCFKNTLTFGSIIWC, AFGLMTTLAIASSLILVASTFV, and LICAVIVIATGLPAYAFWA.

Belongs to the amino acid-polyamine-organocation (APC) superfamily.

Its subcellular location is the cell inner membrane. It carries out the reaction N(6)-(D-fructosyl)-L-lysine(in) = N(6)-(D-fructosyl)-L-lysine(out). It catalyses the reaction N(6)-(D-psicosyl)-L-lysine(in) = N(6)-(D-psicosyl)-L-lysine(out). Its pathway is carbohydrate metabolism; fructoselysine degradation. Its function is as follows. Is likely involved in the transport of fructoselysine and psicoselysine to the cytoplasm, where they are degraded. In Escherichia coli (strain K12), this protein is Probable fructoselysine/psicoselysine transporter FrlA.